We begin with the raw amino-acid sequence, 901 residues long: Protein translocase subunit SecA (901 aa).

Residues Q87, 105-109, and D512 contribute to the ATP site; that span reads GEGKT. The segment at 859-901 is disordered; sequence HQDDDSAAAAALAAQTGERKVGRNDPCPCGSGKKYKQCHGRLQ. The Zn(2+) site is built by C885, C887, C896, and H897. Basic residues predominate over residues 891 to 901; that stretch reads KKYKQCHGRLQ.

The protein belongs to the SecA family. Monomer and homodimer. Part of the essential Sec protein translocation apparatus which comprises SecA, SecYEG and auxiliary proteins SecDF-YajC and YidC. Requires Zn(2+) as cofactor.

It localises to the cell inner membrane. The protein resides in the cytoplasm. It catalyses the reaction ATP + H2O + cellular proteinSide 1 = ADP + phosphate + cellular proteinSide 2.. Functionally, part of the Sec protein translocase complex. Interacts with the SecYEG preprotein conducting channel. Has a central role in coupling the hydrolysis of ATP to the transfer of proteins into and across the cell membrane, serving both as a receptor for the preprotein-SecB complex and as an ATP-driven molecular motor driving the stepwise translocation of polypeptide chains across the membrane. In Escherichia coli O139:H28 (strain E24377A / ETEC), this protein is Protein translocase subunit SecA.